A 190-amino-acid chain; its full sequence is Translation initiation factor IF-3 (190 aa).

It belongs to the IF-3 family. As to quaternary structure, monomer.

It is found in the cytoplasm. IF-3 binds to the 30S ribosomal subunit and shifts the equilibrium between 70S ribosomes and their 50S and 30S subunits in favor of the free subunits, thus enhancing the availability of 30S subunits on which protein synthesis initiation begins. This chain is Translation initiation factor IF-3, found in Prochlorococcus marinus (strain MIT 9301).